The sequence spans 241 residues: MKIVTVNDYDEMSKFAAKIIASQIILKENSVLGLATGGTPLGMYKELINLYNKENLNFSKVQTFNLDEYYGVSDDNPQSYHYYMKNNFFKFTNIKNENINILDGTTSDIENECKSYDNKILSSGGIDIQVLGIGENGHIGFNEPDINFEAKTHLVKLDEKTIEANSRFFNSKNEVPTSALSMGIKTIMQSKKILLLANGEKKAEAIFKMVNGKISPEVPASILQLHNDTTIIIDKAAAKML.

Aspartate 67 serves as the catalytic Proton acceptor; for enolization step. The active-site For ring-opening step is the asparagine 136. Histidine 138 (proton acceptor; for ring-opening step) is an active-site residue. The For ring-opening step role is filled by glutamate 143.

This sequence belongs to the glucosamine/galactosamine-6-phosphate isomerase family. NagB subfamily.

It carries out the reaction alpha-D-glucosamine 6-phosphate + H2O = beta-D-fructose 6-phosphate + NH4(+). Its pathway is amino-sugar metabolism; N-acetylneuraminate degradation; D-fructose 6-phosphate from N-acetylneuraminate: step 5/5. In terms of biological role, catalyzes the reversible isomerization-deamination of glucosamine 6-phosphate (GlcN6P) to form fructose 6-phosphate (Fru6P) and ammonium ion. This is Glucosamine-6-phosphate deaminase from Clostridium acetobutylicum (strain ATCC 824 / DSM 792 / JCM 1419 / IAM 19013 / LMG 5710 / NBRC 13948 / NRRL B-527 / VKM B-1787 / 2291 / W).